The sequence spans 284 residues: Bifunctional protein FolD (284 aa).

Residues 166-168 (GAS) and isoleucine 232 each bind NADP(+).

It belongs to the tetrahydrofolate dehydrogenase/cyclohydrolase family. Homodimer.

It carries out the reaction (6R)-5,10-methylene-5,6,7,8-tetrahydrofolate + NADP(+) = (6R)-5,10-methenyltetrahydrofolate + NADPH. The enzyme catalyses (6R)-5,10-methenyltetrahydrofolate + H2O = (6R)-10-formyltetrahydrofolate + H(+). It functions in the pathway one-carbon metabolism; tetrahydrofolate interconversion. Catalyzes the oxidation of 5,10-methylenetetrahydrofolate to 5,10-methenyltetrahydrofolate and then the hydrolysis of 5,10-methenyltetrahydrofolate to 10-formyltetrahydrofolate. The polypeptide is Bifunctional protein FolD (Shewanella halifaxensis (strain HAW-EB4)).